Reading from the N-terminus, the 28-residue chain is Mu-theraphotoxin-Hsp1a (28 aa).

Disulfide bonds link C2–C16, C9–C21, and C15–C25. N28 carries the asparagine amide modification.

The protein belongs to the neurotoxin 30 (phrixotoxin) family. In terms of tissue distribution, expressed by the venom gland.

Its subcellular location is the secreted. Functionally, potent and selective inhibitor of Nav1.7/SCN9A sodium channels. Inhibits Nav1.7/SCN9A peak current (IC(50)=13 nM). In vivo, does not induce visible signs of toxicity when intravenously injected into mice. The chain is Mu-theraphotoxin-Hsp1a from Homoeomma sp. (Peruvian tarantula).